The primary structure comprises 415 residues: tRNA(Ile2) 2-agmatinylcytidine synthetase TiaS (415 aa).

It belongs to the TiaS family.

It localises to the cytoplasm. It catalyses the reaction cytidine(34) in tRNA(Ile2) + agmatine + ATP + H2O = 2-agmatinylcytidine(34) in tRNA(Ile2) + AMP + 2 phosphate + 2 H(+). In terms of biological role, ATP-dependent agmatine transferase that catalyzes the formation of 2-agmatinylcytidine (agm2C) at the wobble position (C34) of tRNA(Ile2), converting the codon specificity from AUG to AUA. This chain is tRNA(Ile2) 2-agmatinylcytidine synthetase TiaS, found in Pyrobaculum neutrophilum (strain DSM 2338 / JCM 9278 / NBRC 100436 / V24Sta) (Thermoproteus neutrophilus).